We begin with the raw amino-acid sequence, 126 residues long: MVYDFKAEIVKAKNSGSAKSGSHHWLLQRVTGIILALCSVWLIYFTLTNKNNDINIIMLWELKKPFNVVALLITVVISLYHAMLGMRVVIEDYISYHKLRNTLIIIVQLFCIVTIVAFVVALFYKG.

The Cytoplasmic portion of the chain corresponds to 1-24 (MVYDFKAEIVKAKNSGSAKSGSHH). A helical transmembrane segment spans residues 25-45 (WLLQRVTGIILALCSVWLIYF). Residues 46-68 (TLTNKNNDINIIMLWELKKPFNV) lie on the Periplasmic side of the membrane. The helical transmembrane segment at 69-90 (VALLITVVISLYHAMLGMRVVI) threads the bilayer. Residue histidine 81 coordinates heme. Residues 91–100 (EDYISYHKLR) lie on the Cytoplasmic side of the membrane. Tyrosine 93 lines the a ubiquinone pocket. A helical membrane pass occupies residues 101–124 (NTLIIIVQLFCIVTIVAFVVALFY).

Part of an enzyme complex containing four subunits: a flavoprotein, an iron-sulfur protein, plus two membrane-anchoring proteins, SdhC and SdhD. It depends on heme as a cofactor.

Its subcellular location is the cell inner membrane. It functions in the pathway carbohydrate metabolism; tricarboxylic acid cycle. Membrane-anchoring subunit of succinate dehydrogenase (SDH). The chain is Succinate dehydrogenase hydrophobic membrane anchor subunit (sdhD) from Rickettsia conorii (strain ATCC VR-613 / Malish 7).